The chain runs to 252 residues: 3-dehydroquinate dehydratase (252 aa).

Residues 46–48 and Arg82 each bind 3-dehydroquinate; that span reads EWR. His143 functions as the Proton donor/acceptor in the catalytic mechanism. The active-site Schiff-base intermediate with substrate is the Lys170. 3-dehydroquinate-binding residues include Arg212, Ser231, and Gln235.

The protein belongs to the type-I 3-dehydroquinase family. As to quaternary structure, homodimer.

The enzyme catalyses 3-dehydroquinate = 3-dehydroshikimate + H2O. It participates in metabolic intermediate biosynthesis; chorismate biosynthesis; chorismate from D-erythrose 4-phosphate and phosphoenolpyruvate: step 3/7. Involved in the third step of the chorismate pathway, which leads to the biosynthesis of aromatic amino acids. Catalyzes the cis-dehydration of 3-dehydroquinate (DHQ) and introduces the first double bond of the aromatic ring to yield 3-dehydroshikimate. The sequence is that of 3-dehydroquinate dehydratase from Listeria monocytogenes serovar 1/2a (strain ATCC BAA-679 / EGD-e).